The following is a 167-amino-acid chain: 6,7-dimethyl-8-ribityllumazine synthase (167 aa).

5-amino-6-(D-ribitylamino)uracil is bound by residues F23, 57 to 59 (TYE), and 81 to 83 (AVI). 86 to 87 (GT) is a (2S)-2-hydroxy-3-oxobutyl phosphate binding site. The active-site Proton donor is the H89. Residue F119 participates in 5-amino-6-(D-ribitylamino)uracil binding. Position 133 (R133) interacts with (2S)-2-hydroxy-3-oxobutyl phosphate.

Belongs to the DMRL synthase family.

It carries out the reaction (2S)-2-hydroxy-3-oxobutyl phosphate + 5-amino-6-(D-ribitylamino)uracil = 6,7-dimethyl-8-(1-D-ribityl)lumazine + phosphate + 2 H2O + H(+). Its pathway is cofactor biosynthesis; riboflavin biosynthesis; riboflavin from 2-hydroxy-3-oxobutyl phosphate and 5-amino-6-(D-ribitylamino)uracil: step 1/2. Catalyzes the formation of 6,7-dimethyl-8-ribityllumazine by condensation of 5-amino-6-(D-ribitylamino)uracil with 3,4-dihydroxy-2-butanone 4-phosphate. This is the penultimate step in the biosynthesis of riboflavin. The polypeptide is 6,7-dimethyl-8-ribityllumazine synthase (Myxococcus xanthus (strain DK1622)).